A 588-amino-acid polypeptide reads, in one-letter code: Lysine--tRNA ligase (588 aa).

Polar residues predominate over residues 1-10 (MDSSVSTEPL). The disordered stretch occupies residues 1-54 (MDSSVSTEPLSKNALKREKKAKEKEQLEQEKKAAAVAKRQMEQHNLPENDDLDP). Positions 20 to 47 (KAKEKEQLEQEKKAAAVAKRQMEQHNLP) are enriched in basic and acidic residues.

It belongs to the class-II aminoacyl-tRNA synthetase family.

Its subcellular location is the cytoplasm. It carries out the reaction tRNA(Lys) + L-lysine + ATP = L-lysyl-tRNA(Lys) + AMP + diphosphate. This Solanum lycopersicum (Tomato) protein is Lysine--tRNA ligase (LYSRS).